A 98-amino-acid chain; its full sequence is Signal peptidase complex subunit 1 (98 aa).

Topologically, residues 1–18 (MLDIQTHMDFAGQGKAER) are cytoplasmic. The chain crosses the membrane as a helical span at residues 19 to 38 (WSRFIITFFGIVGLVYGAFV). Residues 39–42 (QQFS) lie on the Lumenal side of the membrane. The helical transmembrane segment at 43-65 (QTVYILGAGFVLSSLITIPPWPL) threads the bilayer. Residues 66–98 (YRRNALKWQKPIDTDAKSSSSESGDEGKKKKKQ) are Cytoplasmic-facing. Residues 78–98 (DTDAKSSSSESGDEGKKKKKQ) are disordered. S84, S85, S86, and S88 each carry phosphoserine.

Belongs to the SPCS1 family. As to quaternary structure, component of the signal peptidase complex (SPC) composed of a catalytic subunit twr/SEC11 and three accessory subunits Spase12/SPCS1, Spase25/SPCS2 and Spase22-23/SPCS3. The complex induces a local thinning of the ER membrane which is used to measure the length of the signal peptide (SP) h-region of protein substrates. This ensures the selectivity of the complex towards h-regions shorter than 18-20 amino acids.

It localises to the endoplasmic reticulum membrane. In terms of biological role, component of the signal peptidase complex (SPC) which catalyzes the cleavage of N-terminal signal sequences from nascent proteins as they are translocated into the lumen of the endoplasmic reticulum. Dispensable for SPC enzymatic activity. Its function is as follows. (Microbial infection) Plays an important role in infection by flaviviruses such as West Nile virus and Dengue virus type 2. The chain is Signal peptidase complex subunit 1 (Spase12) from Drosophila melanogaster (Fruit fly).